Reading from the N-terminus, the 175-residue chain is MCNSIILENKIFDSQWDNKNHTLFENLMPRDNNNLIENSNYDNNNINNNNNNNNTDNDNDNNNDNEPFYNSNIPNEMQINKYSRFGFKPSQPISKKNENQIEFNNILSFSIKSFLLLILYILFFNYQLYSKYFIILLSLNLIITLISIKSIFKYKNLKKLKNILIYKIQSKIIIL.

The segment covering 35-56 (LIENSNYDNNNINNNNNNNNTD) has biased composition (low complexity). Residues 35–70 (LIENSNYDNNNINNNNNNNNTDNDNDNNNDNEPFYN) form a disordered region. The next 2 membrane-spanning stretches (helical) occupy residues 106-126 (ILSFSIKSFLLLILYILFFNY) and 132-152 (YFIILLSLNLIITLISIKSIF).

It is found in the membrane. This is an uncharacterized protein from Dictyostelium discoideum (Social amoeba).